The chain runs to 281 residues: Acetyl-coenzyme A carboxylase carboxyl transferase subunit beta (281 aa).

A CoA carboxyltransferase N-terminal domain is found at 23–281; that stretch reads LWSKCEDCGA…KTLAMMRVEG (259 aa). Zn(2+) is bound by residues C27, C30, C46, and C49. The C4-type zinc-finger motif lies at 27–49; that stretch reads CEDCGAMLHRRQLEENLNTCNEC.

The protein belongs to the AccD/PCCB family. As to quaternary structure, acetyl-CoA carboxylase is a heterohexamer composed of biotin carboxyl carrier protein (AccB), biotin carboxylase (AccC) and two subunits each of ACCase subunit alpha (AccA) and ACCase subunit beta (AccD). Zn(2+) is required as a cofactor.

It localises to the cytoplasm. It carries out the reaction N(6)-carboxybiotinyl-L-lysyl-[protein] + acetyl-CoA = N(6)-biotinyl-L-lysyl-[protein] + malonyl-CoA. It participates in lipid metabolism; malonyl-CoA biosynthesis; malonyl-CoA from acetyl-CoA: step 1/1. Its function is as follows. Component of the acetyl coenzyme A carboxylase (ACC) complex. Biotin carboxylase (BC) catalyzes the carboxylation of biotin on its carrier protein (BCCP) and then the CO(2) group is transferred by the transcarboxylase to acetyl-CoA to form malonyl-CoA. The chain is Acetyl-coenzyme A carboxylase carboxyl transferase subunit beta from Chlorobium luteolum (strain DSM 273 / BCRC 81028 / 2530) (Pelodictyon luteolum).